The sequence spans 356 residues: Chorismate synthase (356 aa).

NADP(+) contacts are provided by Arg48 and Arg54. FMN contacts are provided by residues 125–127 (RSS), 237–238 (NA), Gly281, 296–300 (KPTSS), and Arg322.

The protein belongs to the chorismate synthase family. In terms of assembly, homotetramer. FMNH2 is required as a cofactor.

It carries out the reaction 5-O-(1-carboxyvinyl)-3-phosphoshikimate = chorismate + phosphate. It functions in the pathway metabolic intermediate biosynthesis; chorismate biosynthesis; chorismate from D-erythrose 4-phosphate and phosphoenolpyruvate: step 7/7. In terms of biological role, catalyzes the anti-1,4-elimination of the C-3 phosphate and the C-6 proR hydrogen from 5-enolpyruvylshikimate-3-phosphate (EPSP) to yield chorismate, which is the branch point compound that serves as the starting substrate for the three terminal pathways of aromatic amino acid biosynthesis. This reaction introduces a second double bond into the aromatic ring system. In Novosphingobium aromaticivorans (strain ATCC 700278 / DSM 12444 / CCUG 56034 / CIP 105152 / NBRC 16084 / F199), this protein is Chorismate synthase.